The sequence spans 70 residues: Small ribosomal subunit protein bS21 (70 aa).

It belongs to the bacterial ribosomal protein bS21 family.

This Herminiimonas arsenicoxydans protein is Small ribosomal subunit protein bS21.